A 433-amino-acid chain; its full sequence is MTDQDLLAQIELLKKENAQLKEKLKSQDDEQLSLEEYSRYGRQMIVEGTGGVVGQLRLKKAKVLVVGAGGLGSPSLPYLVGAGVGTIGIVDNDIVDTSNLHRQTIHNTAKVGMLKCESAKQVLKDLNPHVNINTYPVRLGPENAFSIFADYDIVMDCTDTPLTRYLISDVAVNLGKTVVSASGLGTEGQLTILNFNNIGPCYRCFYPVSPNPYAVSSCQEGGVIGPCIGLVGTMMAVETLKIIMGVYNNENFEPFLLSYSGFPIQSLRRFKMRGRQSKCQTCGDAPVITKEAIESGIIDYNIFCGSRNYNVCAEGERLTAKEFDENYGPEFSGNNKVLLDVRPSHHFDISHFNNAVNIPLKELRDMDGDISTLQSRIPNINKNSEVVVLCRYGNDSQLATRMLKDEFGITNVKDVAGGFFKYIDDVDQSIPKY.

Residues G70, D91, S98–R102, K115, and D159–T160 contribute to the ATP site. Residues C201 and C204 each contribute to the Zn(2+) site. C218 functions as the Glycyl thioester intermediate; for adenylyltransferase activity in the catalytic mechanism. Residues C279 and C282 each coordinate Zn(2+). Residues S332–P431 form the Rhodanese domain. The Cysteine persulfide intermediate; for sulfurtransferase activity role is filled by C390.

The protein in the N-terminal section; belongs to the HesA/MoeB/ThiF family. UBA4 subfamily. Requires Zn(2+) as cofactor.

The protein localises to the cytoplasm. Its subcellular location is the cytosol. It participates in tRNA modification; 5-methoxycarbonylmethyl-2-thiouridine-tRNA biosynthesis. Functionally, plays a central role in 2-thiolation of mcm(5)S(2)U at tRNA wobble positions of cytosolic tRNA(Lys), tRNA(Glu) and tRNA(Gln). Acts by mediating the C-terminal thiocarboxylation of sulfur carrier URM1. Its N-terminus first activates URM1 as acyl-adenylate (-COAMP), then the persulfide sulfur on the catalytic cysteine is transferred to URM1 to form thiocarboxylation (-COSH) of its C-terminus. The reaction probably involves hydrogen sulfide that is generated from the persulfide intermediate and that acts as a nucleophile towards URM1. Subsequently, a transient disulfide bond is formed. Does not use thiosulfate as sulfur donor; NFS1 probably acting as a sulfur donor for thiocarboxylation reactions. Prior mcm(5) tRNA modification by the elongator complex is required for 2-thiolation. May also be involved in protein urmylation. The protein is Adenylyltransferase and sulfurtransferase UBA4 of Candida glabrata (strain ATCC 2001 / BCRC 20586 / JCM 3761 / NBRC 0622 / NRRL Y-65 / CBS 138) (Yeast).